The chain runs to 237 residues: Phosphoserine phosphatase (237 aa).

Asp39 acts as the Nucleophile in catalysis. Asp39 and Glu41 together coordinate Mg(2+). The Proton donor role is filled by Glu41. Residues Glu47, Arg78, 122–123 (SD), and Lys165 contribute to the substrate site. Asp184 contributes to the Mg(2+) binding site. Substrate is bound at residue Asn187.

This sequence belongs to the thrH family. The cofactor is Mg(2+).

The catalysed reaction is O-phospho-L-serine + H2O = L-serine + phosphate. It catalyses the reaction O-phospho-D-serine + H2O = D-serine + phosphate. It functions in the pathway amino-acid biosynthesis; L-serine biosynthesis; L-serine from 3-phospho-D-glycerate: step 3/3. Its function is as follows. Phosphoserine phosphatase that mediates dephosphorylation of phosphoserine in the serine biosynthesis pathway. Also able to dephosphorylate phospho-threonine. This is Phosphoserine phosphatase from Pseudomonas syringae pv. tomato (strain ATCC BAA-871 / DC3000).